The following is a 229-amino-acid chain: Ribosome maturation factor RimM (229 aa).

The disordered stretch occupies residues 1 to 39 (MAGHDSGSAKRGRSPSFGVFVRKPVERAPTKGAGDGAAD). In terms of domain architecture, PRC barrel spans 148–229 (ADEFYWVDLI…RIVVDWEADY (82 aa)).

This sequence belongs to the RimM family. As to quaternary structure, binds ribosomal protein uS19.

It localises to the cytoplasm. Functionally, an accessory protein needed during the final step in the assembly of 30S ribosomal subunit, possibly for assembly of the head region. Essential for efficient processing of 16S rRNA. May be needed both before and after RbfA during the maturation of 16S rRNA. It has affinity for free ribosomal 30S subunits but not for 70S ribosomes. This Burkholderia thailandensis (strain ATCC 700388 / DSM 13276 / CCUG 48851 / CIP 106301 / E264) protein is Ribosome maturation factor RimM.